Consider the following 576-residue polypeptide: MRFRYRKWRRPRRLFRSRRRRGYARRRWRRRAWGRRRRVRRYRRRRGGTKRQYISSIMQWNPQHRHLCYIKGITWLCAARADRMSWPGIKQIAATDSTRYWSTILVGGCGVLTLSMDWFFFENLRWRNRWSHSNVGYDLARYMGTHLYFPPLADIWYIVWTDTEFVDQPKKVMSYTHPWILLMTKKHKVIKPRKWNGKGKKIFLKPPAVFNSAWYTSDKWCGAGLGRIYFSFLNPFKQIMHTNQTEQSFPFAIELGNTDYDKPPNNSYDFKDTNEVKKVWNTAGKKYYYRADWDTGDGNAIMLPNTLSPTTPASWLLLEWDAPYWLWFWGKTYQDFVSSHTPEGNPYYGQIYVKWWPITNPYDQGPHTYPEDKEWCLMMLDPQPNFMTCNSIAAALKIAAFGPCVYAPQDTQTSQIPINIPMYYLSKWQWGGSTQGTSTHIDNPCNPRPKSIQIADPATAPRDVIHPWDVDASGTISTAKLKQLMEGLGYREPKPKPGPPETLIPPGAPTPELDYYSSETESDDFDTGDSEEEEEDHQDPRWVRESLDKLTRRLRGERRQRQQLGKGLLALLKEKK.

Positions 489–576 (GYREPKPKPG…GLLALLKEKK (88 aa)) are disordered. Over residues 496 to 509 (KPGPPETLIPPGAP) the composition is skewed to pro residues. The span at 520–537 (TESDDFDTGDSEEEEEDH) shows a compositional bias: acidic residues. Basic and acidic residues predominate over residues 538-551 (QDPRWVRESLDKLT). Residues 562 to 576 (QQLGKGLLALLKEKK) show a composition bias toward low complexity.

This sequence belongs to the anelloviridae capsid protein family.

It localises to the virion. Functionally, self-assembles to form an icosahedral capsid with a T=1 symmetry, about 30 nm in diameter, and consisting of 60 capsid proteins. The capsid encapsulates the genomic DNA. Capsid protein is involved in attachment and entry into the host cell. This is Capsid protein from Torque teno canis virus (isolate Cf-TTV10).